Consider the following 319-residue polypeptide: Acetyl-coenzyme A carboxylase carboxyl transferase subunit alpha (319 aa).

A CoA carboxyltransferase C-terminal domain is found at 35–296 (DLDKEIEQLE…KATLLRQLED (262 aa)).

It belongs to the AccA family. Acetyl-CoA carboxylase is a heterohexamer composed of biotin carboxyl carrier protein (AccB), biotin carboxylase (AccC) and two subunits each of ACCase subunit alpha (AccA) and ACCase subunit beta (AccD).

The protein localises to the cytoplasm. The catalysed reaction is N(6)-carboxybiotinyl-L-lysyl-[protein] + acetyl-CoA = N(6)-biotinyl-L-lysyl-[protein] + malonyl-CoA. Its pathway is lipid metabolism; malonyl-CoA biosynthesis; malonyl-CoA from acetyl-CoA: step 1/1. In terms of biological role, component of the acetyl coenzyme A carboxylase (ACC) complex. First, biotin carboxylase catalyzes the carboxylation of biotin on its carrier protein (BCCP) and then the CO(2) group is transferred by the carboxyltransferase to acetyl-CoA to form malonyl-CoA. The polypeptide is Acetyl-coenzyme A carboxylase carboxyl transferase subunit alpha (Vibrio parahaemolyticus serotype O3:K6 (strain RIMD 2210633)).